The sequence spans 174 residues: Small ribosomal subunit protein uS5 (174 aa).

One can recognise an S5 DRBM domain in the interval 18 to 81 (WQERVIQIRR…ADGKKHLIDI (64 aa)).

The protein belongs to the universal ribosomal protein uS5 family. In terms of assembly, part of the 30S ribosomal subunit. Contacts proteins S4 and S8.

Its function is as follows. With S4 and S12 plays an important role in translational accuracy. Functionally, located at the back of the 30S subunit body where it stabilizes the conformation of the head with respect to the body. The polypeptide is Small ribosomal subunit protein uS5 (Trichormus variabilis (strain ATCC 29413 / PCC 7937) (Anabaena variabilis)).